Here is a 397-residue protein sequence, read N- to C-terminus: COP9 signalosome complex subunit 4 (397 aa).

The residue at position 1 (Met1) is an N-acetylmethionine. Residues 197 to 365 enclose the PCI domain; it reads ALRYYGISQI…AVIHFEDDVE (169 aa).

This sequence belongs to the CSN4 family. In terms of assembly, component of the CSN complex, probably composed of CSN1, CSN2, CSN3, CSN4, CSN5 (CSN5A or CSN5B), CSN6 (CSN6A or CSN6B), CSN7 and CSN8. Interacts with itself. In the complex, it is located in the center and probably interacts directly with CSN1, CSN2, CSN3, CSN4, CSN5A or CSN5B, CSN6A or CSN6B, CSN7 and CSN8. Interacts with COP10. Binds to the translation initiation factors TIF3E1.

It is found in the cytoplasm. The protein localises to the nucleus. In terms of biological role, component of the COP9 signalosome complex (CSN), a complex involved in various cellular and developmental processes such as photomorphogenesis and auxin and jasmonate responses. The CSN complex is an essential regulator of the ubiquitin (Ubl) conjugation pathway by mediating the deneddylation of the cullin subunits of SCF-type E3 ligase complexes, leading to decrease the Ubl ligase activity of SCF. It is involved in repression of photomorphogenesis in darkness by regulating the activity of COP1-containing Ubl ligase complexes. The complex is also required for degradation of IAA6 by regulating the activity of the Ubl ligase SCF-TIR complex. This is COP9 signalosome complex subunit 4 (CSN4) from Arabidopsis thaliana (Mouse-ear cress).